The primary structure comprises 400 residues: NADPH dehydrogenase 3 (400 aa).

Positions 38 and 115 each coordinate FMN. His192 and Asn195 together coordinate substrate. Tyr197 serves as the catalytic Proton donor. FMN-binding residues include Arg244 and Arg349. A substrate-binding site is contributed by Tyr376.

Homodimer or heterodimer with OYE2. It depends on FMN as a cofactor.

It catalyses the reaction A + NADPH + H(+) = AH2 + NADP(+). Its function is as follows. Flavin-dependent enoate reductase that catalyzes the chemo- and stereoslective hydrogenation of electron-poor alkenes. The enzyme is reduced by NADPH, and oxygen, quinones, and alpha,beta-unsaturated aldehydes and ketones can act as electron acceptors to complete catalytic turnover. The physiological oxidant remains elusive. Has a prooxidant activity, increasing reactive oxygen species (ROS) levels when overexpressed. Formation of OYE2-OYE3 heterodimers contribute to the induction of programmed cell death upon oxidative stress. The sequence is that of NADPH dehydrogenase 3 from Saccharomyces cerevisiae (strain ATCC 204508 / S288c) (Baker's yeast).